Here is a 338-residue protein sequence, read N- to C-terminus: MKAPFTSLAGFRAVFDALPQPDAAALEAATARNGQLTKPKGALGRLEGLAIWYAGWVGDGRPALERPQVAIFAGNHGIAARGVSAFPPEVTVQMVANYRAGGAAVNQLCKVAGASMTVTELDLDRPTLDFTQGPAMTEDELVAALAAGWEAVEDEADLLVVGEMGIGNTTAAAAIAAALFGGSAGEWTGRGSGVEGAALEGKTLVVAQGLERHAEALSDPVEVLRRLGGRELAAMAGAIARARVGRIPVILDGFICSAAAAVLHAIRPGALDHAVAGHVSAEGAHPAVLARLGKEPILELGMRLGEGTGAIVAINILRSAVACLSGMATFAEAGVAEG.

Catalysis depends on E306, which acts as the Proton acceptor.

The protein belongs to the CobT family.

It catalyses the reaction 5,6-dimethylbenzimidazole + nicotinate beta-D-ribonucleotide = alpha-ribazole 5'-phosphate + nicotinate + H(+). It participates in nucleoside biosynthesis; alpha-ribazole biosynthesis; alpha-ribazole from 5,6-dimethylbenzimidazole: step 1/2. Catalyzes the synthesis of alpha-ribazole-5'-phosphate from nicotinate mononucleotide (NAMN) and 5,6-dimethylbenzimidazole (DMB). This chain is Nicotinate-nucleotide--dimethylbenzimidazole phosphoribosyltransferase, found in Cereibacter sphaeroides (strain ATCC 17025 / ATH 2.4.3) (Rhodobacter sphaeroides).